A 600-amino-acid polypeptide reads, in one-letter code: UvrABC system protein C (600 aa).

The GIY-YIG domain maps to 15 to 100; the sequence is NSAGVYQYFN…IKQLHPKYNI (86 aa). The UVR domain maps to 203–238; sequence SVLLKNLEKQMLVLAQNENYEEAAKVRDQIAMIKDL.

This sequence belongs to the UvrC family. In terms of assembly, interacts with UvrB in an incision complex.

The protein localises to the cytoplasm. Its function is as follows. The UvrABC repair system catalyzes the recognition and processing of DNA lesions. UvrC both incises the 5' and 3' sides of the lesion. The N-terminal half is responsible for the 3' incision and the C-terminal half is responsible for the 5' incision. This chain is UvrABC system protein C, found in Campylobacter jejuni (strain RM1221).